A 314-amino-acid polypeptide reads, in one-letter code: Ribonuclease Z (314 aa).

His62, His64, Asp66, His67, His144, Asp215, and His273 together coordinate Zn(2+). Asp66 serves as the catalytic Proton acceptor.

This sequence belongs to the RNase Z family. In terms of assembly, homodimer. Zn(2+) serves as cofactor.

The enzyme catalyses Endonucleolytic cleavage of RNA, removing extra 3' nucleotides from tRNA precursor, generating 3' termini of tRNAs. A 3'-hydroxy group is left at the tRNA terminus and a 5'-phosphoryl group is left at the trailer molecule.. In terms of biological role, zinc phosphodiesterase, which displays some tRNA 3'-processing endonuclease activity. Probably involved in tRNA maturation, by removing a 3'-trailer from precursor tRNA. The sequence is that of Ribonuclease Z from Prochlorococcus marinus (strain NATL1A).